The chain runs to 130 residues: MKKFAAVIAVMALCSAPVMAAEQGGFSGPSATQSQAGGFQGPNGSVTTVESAKSLRDDTWVTLRGNIVERISDDLYVFKDASGTINVDIDHKRWNGVTVTPKDTVEIQGEVDKDWNSVEIDVKQIRKVNP.

An N-terminal signal peptide occupies residues 1 to 20 (MKKFAAVIAVMALCSAPVMA). The tract at residues 25-44 (GFSGPSATQSQAGGFQGPNG) is disordered. Residues 29 to 44 (PSATQSQAGGFQGPNG) are compositionally biased toward polar residues.

The protein to H.influenzae HI_1709.

Its subcellular location is the periplasm. The protein is Protein YgiW (ygiW) of Escherichia coli O157:H7.